Consider the following 218-residue polypeptide: Glutathione S-transferase Mu 4 (218 aa).

Positions 1–88 constitute a GST N-terminal domain; sequence MPMTLGYWDI…YIARKHNLCG (88 aa). Residues 7-8, 46-50, 59-60, and 72-73 contribute to the glutathione site; these read YW, WLSEK, NL, and QS. One can recognise a GST C-terminal domain in the interval 90-208; the sequence is TEEEKIRVDI…KTSRFLRTPL (119 aa). A substrate-binding site is contributed by Y116.

It belongs to the GST superfamily. Mu family. As to quaternary structure, homodimer. In terms of tissue distribution, widely expressed.

Its subcellular location is the cytoplasm. The enzyme catalyses RX + glutathione = an S-substituted glutathione + a halide anion + H(+). The catalysed reaction is 1-chloro-2,4-dinitrobenzene + glutathione = 2,4-dinitrophenyl-S-glutathione + chloride + H(+). It catalyses the reaction (13S,14S)-epoxy-(4Z,7Z,9E,11E,16Z,19Z)-docosahexaenoate + glutathione = (13R)-S-glutathionyl-(14S)-hydroxy-(4Z,7Z,9E,11E,16Z,19Z)-docosahexaenoate. It carries out the reaction leukotriene C4 = leukotriene A4 + glutathione. Its function is as follows. Conjugation of reduced glutathione to a wide number of exogenous and endogenous hydrophobic electrophiles. Catalyzes the conjugation of leukotriene A4 with reduced glutathione (GSH) to form leukotriene C4. Can also catalyze the transfer of a glutathionyl group from glutathione (GSH) to 13(S),14(S)-epoxy-docosahexaenoic acid to form maresin conjugate in tissue regeneration 1 (MCTR1), a bioactive lipid mediator that possess potent anti-inflammatory and proresolving actions. This chain is Glutathione S-transferase Mu 4, found in Mus musculus (Mouse).